The following is a 333-amino-acid chain: Probable G-protein coupled receptor 33 (333 aa).

The Extracellular portion of the chain corresponds to 1–30 (MDLINSTDYLINASTLVRNSTQFLAPASKM). Residues Asn5, Asn12, and Asn19 are each glycosylated (N-linked (GlcNAc...) asparagine). The helical transmembrane segment at 31–53 (IIALSLYISSIIGTITNGLYLWV) threads the bilayer. Residues 54 to 64 (LRFKMKQTVNT) lie on the Cytoplasmic side of the membrane. Residues 65 to 86 (LLFFHLILSYFISTMILPFMAT) form a helical membrane-spanning segment. Residues 87-103 (SQLQDNHWNFGTALCKV) are Extracellular-facing. Cys101 and Cys179 are oxidised to a cystine. Residues 104–124 (FNGTLSLGMFTSVFFLSAIGL) form a helical membrane-spanning segment. The Cytoplasmic segment spans residues 125-143 (DRYLLTLHPVWSQQHRTPR). Residues 144–165 (WASSIVLGVWISAAALSIPYLI) traverse the membrane as a helical segment. Topologically, residues 166–209 (FRETHHDRKGKVTCQNNYAVSTNWESKEMQASRQWIHVACFISR) are extracellular. Residues 210 to 230 (FLLGFLLPFFIIIFCYERVAS) traverse the membrane as a helical segment. Residues 231–246 (KVKERSLFKSSKPFKV) are Cytoplasmic-facing. The chain crosses the membrane as a helical span at residues 247–268 (MMTAIISFFVCWMPYHIHQGLL). Residues 269-283 (LTTNQSLLLELTLIL) are Extracellular-facing. N-linked (GlcNAc...) asparagine glycosylation is present at Asn272. Residues 284-303 (TVLTTSFNTIFSPTLYLFVG) traverse the membrane as a helical segment. Topologically, residues 304–333 (ENFKKVFKKSILALFESTFSEDSSVERTQT) are cytoplasmic.

The protein belongs to the G-protein coupled receptor 1 family. As to expression, expressed in spleen, lung, heart, liver, kidney, pancreas, thymus, gonads and leukocytes.

It localises to the cell membrane. In terms of biological role, orphan receptor; could be a chemoattractant receptor. The sequence is that of Probable G-protein coupled receptor 33 (GPR33) from Homo sapiens (Human).